The sequence spans 111 residues: Universal stress protein B (111 aa).

The next 2 membrane-spanning stretches (helical) occupy residues 1-21 (MISTVALFWALCVVCIVNMAR) and 90-110 (FILTSALCGLVVVSMVALLIW).

It belongs to the universal stress protein B family.

The protein resides in the cell inner membrane. The protein is Universal stress protein B of Enterobacter sp. (strain 638).